The chain runs to 459 residues: Glycosyl hydrolase family 109 protein (459 aa).

A signal peptide (tat-type signal) is located at residues 1–45 (MAGDESRSNPFSRRTLLRTSAAAGAGLGVAGLSTGYGAAQPVRPA). NAD(+) contacts are provided by residues 70–71 (NR), aspartate 92, 141–144 (WEWH), 161–162 (EC), and asparagine 190. Residues tyrosine 219, arginine 238, 250 to 253 (YPTH), and tyrosine 332 each bind substrate. Tyrosine 250 contributes to the NAD(+) binding site. A disordered region spans residues 440-459 (DFTRGRWQTPHPGVDSPKPA).

Belongs to the Gfo/Idh/MocA family. Glycosyl hydrolase 109 subfamily. NAD(+) serves as cofactor. In terms of processing, predicted to be exported by the Tat system. The position of the signal peptide cleavage has not been experimentally proven.

Functionally, glycosidase. The protein is Glycosyl hydrolase family 109 protein of Saccharopolyspora erythraea (strain ATCC 11635 / DSM 40517 / JCM 4748 / NBRC 13426 / NCIMB 8594 / NRRL 2338).